The chain runs to 1247 residues: Lon protease homolog 2, peroxisomal (1247 aa).

Residues 22–402 (LPTYTLDSNL…LINEMILQLI (381 aa)) enclose the Lon N-terminal domain. 3 disordered regions span residues 76 to 103 (SGNS…ETYH), 447 to 503 (TKNR…DVDD), and 626 to 655 (DQSD…SPTS). Positions 459–477 (PGPASSSGPSFSNGKSSPG) are enriched in low complexity. The segment covering 626-639 (DQSDKSQPIKDNSK) has biased composition (basic and acidic residues). 721 to 728 (GPPGTGKT) contacts ATP. One can recognise a Lon proteolytic domain in the interval 989–1230 (TVGVGVVHGL…YDIIKIVWNE (242 aa)). Residues Ser-1099 and Lys-1142 contribute to the active site.

The protein belongs to the peptidase S16 family.

Its subcellular location is the peroxisome matrix. It carries out the reaction Hydrolysis of proteins in presence of ATP.. In terms of biological role, ATP-dependent serine protease that mediates the selective degradation of misfolded and unassembled polypeptides in the peroxisomal matrix. Necessary for type 2 peroxisome targeting signal (PTS2)-containing protein processing and facilitates peroxisome matrix protein import. This chain is Lon protease homolog 2, peroxisomal, found in Candida dubliniensis (strain CD36 / ATCC MYA-646 / CBS 7987 / NCPF 3949 / NRRL Y-17841) (Yeast).